Consider the following 308-residue polypeptide: Alpha/beta hydrolase domain-containing protein WAV2 (308 aa).

Residues 6 to 26 (SALFYGFGGIVVAGVALLVAF) form a helical membrane-spanning segment. Active-site charge relay system residues include Ser159, Asp243, and Arg308.

It belongs to the serine esterase family. As to expression, expressed in roots, rosette leaves, stems and flowers.

It localises to the cell membrane. Its function is as follows. Involved in the regulation of root growth. Involved in the suppression of the root bending in response to touch stimuli, gravity and light. Negatively regulates stimulus-induced root bending through inhibition of root tip rotation. This Arabidopsis thaliana (Mouse-ear cress) protein is Alpha/beta hydrolase domain-containing protein WAV2.